The chain runs to 119 residues: uncharacterized protein (119 aa).

2 helical membrane-spanning segments follow: residues 52–72 (IVLF…VINI) and 88–108 (VLFS…IFLI).

It localises to the membrane. This is an uncharacterized protein from Dictyostelium discoideum (Social amoeba).